We begin with the raw amino-acid sequence, 323 residues long: rRNA 2'-O-methyltransferase fibrillarin (323 aa).

The interval 1–78 is disordered; sequence MRPGFSPRGG…GGGRGGFGGG (78 aa). Composition is skewed to gly residues over residues 7–44 and 63–78; these read PRGGRGGFGDRGGFGGRGGFGDRGGFRGGSRGGFGGRG and GRGGPRGGGRGGFGGG. 4 positions are modified to asymmetric dimethylarginine: Arg-8, Arg-17, Arg-23, and Arg-29. Residues 174 to 175, 193 to 194, 218 to 219, and 238 to 241 each bind S-adenosyl-L-methionine; these read TT, EF, DA, and DVAQ. The tract at residues 276-308 is helical; the sequence is APEAVFAAEVKKMQQENMKPQEQLTLEPYERDH.

It belongs to the methyltransferase superfamily. Fibrillarin family. Component of box C/D small nucleolar ribonucleoprotein (snoRNP) particles. Part of the small subunit (SSU) processome, composed of more than 70 proteins and the RNA chaperone small nucleolar RNA (snoRNA) U3. Post-translationally, by homology to other fibrillarins, some or all of the N-terminal domain arginines are modified to asymmetric dimethylarginine (DMA).

The protein resides in the nucleus. The protein localises to the nucleolus. It is found in the nucleoplasm. The enzyme catalyses L-glutaminyl-[histone H2A] + S-adenosyl-L-methionine = N(5)-methyl-L-glutaminyl-[histone H2A] + S-adenosyl-L-homocysteine + H(+). It carries out the reaction a ribonucleotide in rRNA + S-adenosyl-L-methionine = a 2'-O-methylribonucleotide in rRNA + S-adenosyl-L-homocysteine + H(+). The catalysed reaction is a ribonucleotide in U6 snRNA + S-adenosyl-L-methionine = a 2'-O-methylribonucleotide in U6 snRNA + S-adenosyl-L-homocysteine + H(+). Functionally, S-adenosyl-L-methionine-dependent methyltransferase that has the ability to methylate both RNAs and proteins. Involved in pre-rRNA processing by catalyzing the site-specific 2'-hydroxyl methylation of ribose moieties in pre-ribosomal RNA. Probably catalyzes 2'-O-methylation of U6 snRNAs in box C/D RNP complexes. U6 snRNA 2'-O-methylation is required for mRNA splicing fidelity. Also acts as a protein methyltransferase by mediating methylation of 'Gln-105' of histone H2A (H2AQ104me), a modification that impairs binding of the FACT complex and is specifically present at 35S ribosomal DNA locus. Part of the small subunit (SSU) processome, first precursor of the small eukaryotic ribosomal subunit. During the assembly of the SSU processome in the nucleolus, many ribosome biogenesis factors, an RNA chaperone and ribosomal proteins associate with the nascent pre-rRNA and work in concert to generate RNA folding, modifications, rearrangements and cleavage as well as targeted degradation of pre-ribosomal RNA by the RNA exosome. This is rRNA 2'-O-methyltransferase fibrillarin (fbl) from Xenopus laevis (African clawed frog).